The sequence spans 389 residues: Succinyl-diaminopimelate desuccinylase (389 aa).

H75 provides a ligand contact to Zn(2+). D77 is an active-site residue. D108 contacts Zn(2+). E142 serves as the catalytic Proton acceptor. The Zn(2+) site is built by E143, E171, and H357.

It belongs to the peptidase M20A family. DapE subfamily. Homodimer. Zn(2+) is required as a cofactor. Co(2+) serves as cofactor.

The enzyme catalyses N-succinyl-(2S,6S)-2,6-diaminopimelate + H2O = (2S,6S)-2,6-diaminopimelate + succinate. It participates in amino-acid biosynthesis; L-lysine biosynthesis via DAP pathway; LL-2,6-diaminopimelate from (S)-tetrahydrodipicolinate (succinylase route): step 3/3. Functionally, catalyzes the hydrolysis of N-succinyl-L,L-diaminopimelic acid (SDAP), forming succinate and LL-2,6-diaminopimelate (DAP), an intermediate involved in the bacterial biosynthesis of lysine and meso-diaminopimelic acid, an essential component of bacterial cell walls. This is Succinyl-diaminopimelate desuccinylase from Paracidovorax citrulli (strain AAC00-1) (Acidovorax citrulli).